The sequence spans 624 residues: ABC transporter G family member 23 (624 aa).

Residues 52-296 enclose the ABC transporter domain; sequence LTVTNLSYTI…IAKLGFQIPE (245 aa). Position 84 to 91 (84 to 91) interacts with ATP; the sequence is GPSGTGKS. The ABC transmembrane type-2 domain maps to 350–560; that stretch reads TEISYLCSRF…PLESMVVNEY (211 aa). Transmembrane regions (helical) follow at residues 369-389, 402-422, 450-470, 480-500, 511-531, and 595-615; these read LFLARTMQAVVAGLGLGSVYT, LGLFAFSLSFLLSSTVEALPI, IAFVPFLFVVSLLFSIPVYWI, FSFFVLCVWLIILMASSLVLF, GNSLICTVLGAFFLFSGYFIP, and INVGIMLAFFVFYRILCWGIL.

This sequence belongs to the ABC transporter superfamily. ABCG family. Eye pigment precursor importer (TC 3.A.1.204) subfamily.

It localises to the membrane. In Arabidopsis thaliana (Mouse-ear cress), this protein is ABC transporter G family member 23 (ABCG23).